The chain runs to 239 residues: Purine nucleoside phosphorylase DeoD-type (239 aa).

H5 contacts a purine D-ribonucleoside. Phosphate-binding positions include G21, R25, R44, and 88 to 91 (RVGS). A purine D-ribonucleoside-binding positions include 180–182 (EME) and 204–205 (SD). D205 functions as the Proton donor in the catalytic mechanism.

The protein belongs to the PNP/UDP phosphorylase family. In terms of assembly, homohexamer; trimer of homodimers.

The enzyme catalyses a purine D-ribonucleoside + phosphate = a purine nucleobase + alpha-D-ribose 1-phosphate. It carries out the reaction a purine 2'-deoxy-D-ribonucleoside + phosphate = a purine nucleobase + 2-deoxy-alpha-D-ribose 1-phosphate. Catalyzes the reversible phosphorolytic breakdown of the N-glycosidic bond in the beta-(deoxy)ribonucleoside molecules, with the formation of the corresponding free purine bases and pentose-1-phosphate. In Salmonella gallinarum (strain 287/91 / NCTC 13346), this protein is Purine nucleoside phosphorylase DeoD-type.